Reading from the N-terminus, the 155-residue chain is Biotin carboxyl carrier protein of acetyl-CoA carboxylase (155 aa).

The Biotinyl-binding domain occupies 72–155; it reads AASDELSGHL…EFDEPLIVIE (84 aa). Position 121 is an N6-biotinyllysine (K121).

In terms of assembly, homodimer.

The protein operates within lipid metabolism; fatty acid biosynthesis. This protein is a component of the acetyl coenzyme A carboxylase complex; first, biotin carboxylase catalyzes the carboxylation of the carrier protein and then the transcarboxylase transfers the carboxyl group to form malonyl-CoA. In Haemophilus influenzae (strain ATCC 51907 / DSM 11121 / KW20 / Rd), this protein is Biotin carboxyl carrier protein of acetyl-CoA carboxylase (accB).